The chain runs to 282 residues: MQEIFLCSISNVRSGDCKEDCAYCTQSSHHQGAIKRYKFKDEKVVLQEARALKQLGALGFCLVTSGRELDDEKCEYIAKLAKAINKEELGLHLIACCGRADLEQLEFLRDAGIHSYNHNLETSQNFFPKICSTHTWEERFITCENALRAGLGLCSGGIFGLNESWEDRIEMLRALASLSPHTTPINFFIKNPVLPIDAETLSADEALECVLLAKEFLPNARLMVAGGREVVFKDNDKQEAKLFEYGINAVVLGDYLTTKGKAPKKDIEKLLSYGLTMATSCH.

A Radical SAM core domain is found at Met1–Arg228. The [4Fe-4S] cluster site is built by Cys17, Cys21, and Cys24. Residues Cys61, Cys96, Cys154, and Arg221 each contribute to the [2Fe-2S] cluster site.

It belongs to the radical SAM superfamily. Biotin synthase family. In terms of assembly, homodimer. Requires [4Fe-4S] cluster as cofactor. The cofactor is [2Fe-2S] cluster.

It carries out the reaction (4R,5S)-dethiobiotin + (sulfur carrier)-SH + 2 reduced [2Fe-2S]-[ferredoxin] + 2 S-adenosyl-L-methionine = (sulfur carrier)-H + biotin + 2 5'-deoxyadenosine + 2 L-methionine + 2 oxidized [2Fe-2S]-[ferredoxin]. Its pathway is cofactor biosynthesis; biotin biosynthesis; biotin from 7,8-diaminononanoate: step 2/2. Catalyzes the conversion of dethiobiotin (DTB) to biotin by the insertion of a sulfur atom into dethiobiotin via a radical-based mechanism. The protein is Biotin synthase of Helicobacter pylori (strain P12).